A 353-amino-acid chain; its full sequence is Protein RecA (353 aa).

Position 65–72 (65–72 (GPESSGKT)) interacts with ATP. The segment covering 334–345 (DAERAGAEREDN) has biased composition (basic and acidic residues). Positions 334-353 (DAERAGAEREDNAAADDENF) are disordered.

The protein belongs to the RecA family.

It localises to the cytoplasm. Functionally, can catalyze the hydrolysis of ATP in the presence of single-stranded DNA, the ATP-dependent uptake of single-stranded DNA by duplex DNA, and the ATP-dependent hybridization of homologous single-stranded DNAs. It interacts with LexA causing its activation and leading to its autocatalytic cleavage. The polypeptide is Protein RecA (Edwardsiella ictaluri (strain 93-146)).